The sequence spans 346 residues: Pheromone receptor 2 (346 aa).

Helical transmembrane passes span 8-28 (VSFG…CLIH), 34-54 (IGVL…GINA), 71-94 (LSAI…LQRL), 115-135 (LIDF…FFIV), 160-180 (FIYH…AVLV), 219-239 (VLVS…GGLL), and 270-290 (LSIL…FFGL).

It belongs to the G-protein coupled receptor 4 family.

It is found in the membrane. Its function is as follows. Receptor for the A1 pheromone, a prenylated mating factor. This is Pheromone receptor 2 (PRA2) from Mycosarcoma maydis (Corn smut fungus).